We begin with the raw amino-acid sequence, 456 residues long: MDSRLQEIRERQKLRRQLLAQQLGAESADSIGAVLNSKDEQREIAETRETCRASYDTSAPNAKRKYLDEGETDEDKMEEYKDELEMQQDEENLPYEEEIYKDSSTFLKGTQSLNPHNDYCQHFVDTGHRPQNFIRDVGLADRFEEYPKLRELIRLKDELIAKSNTPPMYLQADIEAFDIRELTPKFDVILLEPPLEEYYRETGITANEKCWTWDDIMKLEIDEIAAPRSFIFLWCGSGEGLDLGRVCLRKWGYRRCEDICWIKTNKNNPGKTKTLDPKAVFQRTKEHCLMGIKGTVKRSTDGDFIHANVDIDLIITEEPEIGNIEKPVEIFHIIEHFCLGRRRLHLFGRDSTIRPGWLTVGPTLTNSNYNAETYASYFSAPNSYLTGCTEEIERLRPKSPPPKSKSDRGGGAPRGGGRGGTSAGRGRERNRSNFRGERGGFRGGRGGAHRGGFPPR.

The disordered stretch occupies residues 50–75; it reads TCRASYDTSAPNAKRKYLDEGETDED. 2 interaction with METTL3 regions span residues 135-136 and 237-238; these read RD and SG. The tract at residues 245–254 is positively charged region required for RNA-binding; the sequence is RVCLRKWGYR. Interaction with METTL3 regions lie at residues 255-258 and 278-287; these read RCED and KAVFQRTKEH. The segment at 297-298 is positively charged region required for RNA-binding; that stretch reads KR. Residues 308 to 312 form an interaction with METTL3 region; the sequence is NVDID. The disordered stretch occupies residues 393–456; it reads ERLRPKSPPP…GAHRGGFPPR (64 aa). Ser-399 carries the post-translational modification Phosphoserine. Over residues 409–423 the composition is skewed to gly residues; sequence GGGAPRGGGRGGTSA. Positions 425–440 are enriched in basic and acidic residues; it reads RGRERNRSNFRGERGG. The segment covering 441 to 450 has biased composition (gly residues); that stretch reads FRGGRGGAHR.

This sequence belongs to the MT-A70-like family. In terms of assembly, heterodimer; heterodimerizes with METTL3 to form an antiparallel heterodimer that constitutes an active methyltransferase. Component of the WMM complex, a N6-methyltransferase complex composed of a catalytic subcomplex, named MAC, and of an associated subcomplex, named MACOM. The MAC subcomplex is composed of METTL3 and METTL14. The MACOM subcomplex is composed of WTAP, ZC3H13, CBLL1/HAKAI, VIRMA, and, in some cases of RBM15 (RBM15 or RBM15B).

Its subcellular location is the nucleus. The METTL3-METTL14 heterodimer forms a N6-methyltransferase complex that methylates adenosine residues at the N(6) position of some mRNAs and regulates the circadian clock, differentiation of embryonic stem cells and cortical neurogenesis. In the heterodimer formed with METTL3, METTL14 constitutes the RNA-binding scaffold that recognizes the substrate rather than the catalytic core. N6-methyladenosine (m6A), which takes place at the 5'-[AG]GAC-3' consensus sites of some mRNAs, plays a role in mRNA stability and processing. M6A acts as a key regulator of mRNA stability by promoting mRNA destabilization and degradation. In embryonic stem cells (ESCs), m6A methylation of mRNAs encoding key naive pluripotency-promoting transcripts results in transcript destabilization. M6A regulates spermatogonial differentiation and meiosis and is essential for male fertility and spermatogenesis. M6A also regulates cortical neurogenesis: m6A methylation of transcripts related to transcription factors, neural stem cells, the cell cycle and neuronal differentiation during brain development promotes their destabilization and decay, promoting differentiation of radial glial cells. The protein is N(6)-adenosine-methyltransferase non-catalytic subunit METTL14 of Homo sapiens (Human).